Consider the following 681-residue polypeptide: Conserved oligomeric Golgi complex subunit 2 (681 aa).

Belongs to the COG2 family. Component of the conserved oligomeric Golgi complex which is composed of eight different subunits and is required for normal Golgi morphology and localization.

It is found in the golgi apparatus membrane. Its function is as follows. Required for normal Golgi morphology and function. This Caenorhabditis elegans protein is Conserved oligomeric Golgi complex subunit 2 (cogc-2).